Consider the following 230-residue polypeptide: Acyl-protein thioesterase 1 (230 aa).

Catalysis depends on charge relay system residues Ser-119, Asp-174, and His-208. At Lys-224 the chain carries N6-acetyllysine.

The protein belongs to the AB hydrolase superfamily. AB hydrolase 2 family. In terms of assembly, homodimer. In terms of tissue distribution, ubiquitous. Detected at low levels in all tissues tested.

Its subcellular location is the cytoplasm. The protein localises to the cell membrane. The protein resides in the nucleus membrane. It localises to the endoplasmic reticulum. The enzyme catalyses S-hexadecanoyl-L-cysteinyl-[protein] + H2O = L-cysteinyl-[protein] + hexadecanoate + H(+). The catalysed reaction is 1-hexadecanoyl-sn-glycero-3-phosphocholine + H2O = sn-glycerol 3-phosphocholine + hexadecanoate + H(+). It catalyses the reaction a 1-(9Z-octadecenoyl)-2-acyl-sn-glycero-3-phosphocholine + H2O = a 2-acyl-sn-glycero-3-phosphocholine + (9Z)-octadecenoate + H(+). Functionally, acts as an acyl-protein thioesterase. Hydrolyzes fatty acids from S-acylated cysteine residues in proteins such as trimeric G alpha proteins or HRAS. Acts as a palmitoyl thioesterase that catalyzes depalmitoylation of proteins, such as ADRB2, KCNMA1 and SQSTM1. Acts as a negative regulator of autophagy by mediating palmitoylation of SQSTM1, decreasing affinity between SQSTM1 and ATG8 proteins and recruitment of ubiquitinated cargo proteins to autophagosomes. Acts as a lysophospholipase and hydrolyzes lysophosphatidylcholine (lyso-PC). Also hydrolyzes lysophosphatidylethanolamine (lyso-PE), lysophosphatidylinositol (lyso-PI) and lysophosphatidylserine (lyso-PS). Has much higher thioesterase activity than lysophospholipase activity. Contributes to the production of lysophosphatidic acid (LPA) during blood coagulation by recognizing and cleaving plasma phospholipids to generate lysophospholipids which in turn act as substrates for ENPP2 to produce LPA. The sequence is that of Acyl-protein thioesterase 1 (Lypla1) from Rattus norvegicus (Rat).